Consider the following 549-residue polypeptide: Chaperonin GroEL (549 aa).

Residues 30 to 33 (TLGP), Lys51, 87 to 91 (DGTTT), Gly415, 479 to 481 (NAA), and Asp495 each bind ATP.

This sequence belongs to the chaperonin (HSP60) family. In terms of assembly, forms a cylinder of 14 subunits composed of two heptameric rings stacked back-to-back. Interacts with the co-chaperonin GroES.

The protein resides in the cytoplasm. The enzyme catalyses ATP + H2O + a folded polypeptide = ADP + phosphate + an unfolded polypeptide.. Functionally, together with its co-chaperonin GroES, plays an essential role in assisting protein folding. The GroEL-GroES system forms a nano-cage that allows encapsulation of the non-native substrate proteins and provides a physical environment optimized to promote and accelerate protein folding. This chain is Chaperonin GroEL, found in Leptothrix cholodnii (strain ATCC 51168 / LMG 8142 / SP-6) (Leptothrix discophora (strain SP-6)).